Consider the following 541-residue polypeptide: AT-rich interactive domain-containing protein 3A (541 aa).

A disordered region spans residues 17 to 172; sequence RLQQELEARQ…KHPNPQAFPT (156 aa). Low complexity predominate over residues 55-73; it reads LKIQRAQAAALAAMRAAAA. Residues 84 to 102 show a composition bias toward acidic residues; the sequence is SDEEEEDGESMASDEEDEK. The segment covering 103-112 has biased composition (basic and acidic residues); sequence ERDGESERYP. A compositionally biased stretch (acidic residues) spans 115-144; the sequence is GSEEEDLKGKWDEDDFEDEGEEDDYEDMEE. The ARID domain maps to 212–304; it reads DPKRKEFLDD…YLYPYECEKR (93 aa). The region spanning 407-501 is the REKLES domain; it reads AALEQLREKL…GVLFAQPPTS (95 aa). Positions 408-450 are important for nuclear localization; sequence ALEQLREKLESGEPPEKKMALGTEEQQRLQRAIQHNLLAMTAQ. Positions 452 to 473 are homodimerization; that stretch reads PMNIRINSQAEGRQDSAVNLTT. An important for cytoplasmic localization region spans residues 497-504; sequence QPPTSASG. Residues 499-541 are disordered; the sequence is PTSASGTSKGSSNRTGSIGGGSSTSQAAPPPAPSAPTSNNPSP.

In terms of assembly, homodimer.

The protein resides in the nucleus. The protein localises to the cytoplasm. Transcription factor required for smad1 and smad2-mediated responses to TGFbeta during mesoderm induction. The protein is AT-rich interactive domain-containing protein 3A (arid3a) of Xenopus tropicalis (Western clawed frog).